The primary structure comprises 1358 residues: DNA-directed RNA polymerase subunit beta (1358 aa).

It belongs to the RNA polymerase beta chain family. In terms of assembly, the RNAP catalytic core consists of 2 alpha, 1 beta, 1 beta' and 1 omega subunit. When a sigma factor is associated with the core the holoenzyme is formed, which can initiate transcription.

It carries out the reaction RNA(n) + a ribonucleoside 5'-triphosphate = RNA(n+1) + diphosphate. In terms of biological role, DNA-dependent RNA polymerase catalyzes the transcription of DNA into RNA using the four ribonucleoside triphosphates as substrates. In Neorickettsia sennetsu (strain ATCC VR-367 / Miyayama) (Ehrlichia sennetsu), this protein is DNA-directed RNA polymerase subunit beta.